We begin with the raw amino-acid sequence, 499 residues long: Sialic acid-binding Ig-like lectin 8 (499 aa).

The first 16 residues, 1-16 (MLLLLLLLPLLWGTKG), serve as a signal peptide directing secretion. At 17-363 (MEGDRQYGDG…RPVSQVTLAA (347 aa)) the chain is on the extracellular side. Residues Tyr23, 72–75 (RPYQ), Arg125, and 134–138 (SYKSQ) each bind a carbohydrate. In terms of domain architecture, Ig-like V-type spans 40 to 123 (GLCVHVPCSF…ARKRDKGSYF (84 aa)). Cystine bridges form between Cys42/Cys181, Cys47/Cys107, and Cys175/Cys224. Ig-like C2-type domains are found at residues 157-240 (PDIL…STVR) and 246-344 (PPWN…LSLS). Asn172 carries N-linked (GlcNAc...) asparagine glycosylation. N-linked (GlcNAc...) asparagine glycosylation is found at Asn249 and Asn267. The cysteines at positions 283 and 328 are disulfide-linked. A helical membrane pass occupies residues 364–384 (VGGAGATALAFLSFCIIFIIV). The Cytoplasmic segment spans residues 385-499 (RSCRKKSARP…HNPSSKEVRG (115 aa)). A disordered region spans residues 410 to 443 (RGSASQGPLTESWKDGNPLKKPPPAVAPSSGEEG). An ITIM motif motif is present at residues 445–450 (LHYATL). 2 disordered regions span residues 451–470 (SFHK…DSEY) and 478–499 (RETA…EVRG). The SLAM-like motif motif lies at 468-473 (SEYSEI).

The protein belongs to the immunoglobulin superfamily. SIGLEC (sialic acid binding Ig-like lectin) family. Expressed specifically on blood cells namely basophil, mast cells and eosinophils.

The protein localises to the membrane. In terms of biological role, putative adhesion molecule that mediates sialic-acid dependent binding to blood cells. Preferentially binds to alpha-2,3-linked sialic acid. Also binds to alpha-2,6-linked sialic acid. The sialic acid recognition site may be masked by cis interactions with sialic acids on the same cell surface. Recognizes simultaneously epitopes having a terminal N-acetylneuraminic acid (sialic acid) and an underlying 6-O-sulfated galactose. Preferentially binds to Gal-6-sulfated sialyl-Lewis X glycan epitopes. The polypeptide is Sialic acid-binding Ig-like lectin 8 (SIGLEC8) (Homo sapiens (Human)).